The following is a 351-amino-acid chain: Serine/threonine-protein kinase mos (351 aa).

Residues 71-340 (FSIDGVIGSG…ERRTDDTENL (270 aa)) enclose the Protein kinase domain. ATP contacts are provided by residues 77 to 85 (IGSGGFGSV) and Lys-98. The Proton acceptor role is filled by Asp-194.

It belongs to the protein kinase superfamily. Ser/Thr protein kinase family.

The enzyme catalyses L-seryl-[protein] + ATP = O-phospho-L-seryl-[protein] + ADP + H(+). It carries out the reaction L-threonyl-[protein] + ATP = O-phospho-L-threonyl-[protein] + ADP + H(+). Functionally, suppresses the mitotic cell cycle in oocytes, forcing them to undergo meiosis II to produce haploid gametes. Acts as a MAPK kinase kinase (MAP3K) that acts upstream of MAP kinase in oocytes. The sequence is that of Serine/threonine-protein kinase mos from Patiria pectinifera (Starfish).